Here is a 1462-residue protein sequence, read N- to C-terminus: Gag-Pol polyprotein (1462 aa).

Gly2 is lipidated: N-myristoyl glycine; by host. An interaction with Gp41 region spans residues 7-31 (VLRGKKADELEKVRLRPNGKKRYRL). The short motif at 16 to 22 (LEKVRLR) is the Nuclear export signal element. A Nuclear localization signal motif is present at residues 26–32 (KKRYRLK). An interaction with human PPIA/CYPA and NUP153 region spans residues 191 to 228 (NCVGDHQAAMQIIREIINEEAADWDAQHPIPGPLPAGQ). Residues 279-365 (YNPTNILDVK…GGPSQKARLM (87 aa)) form a dimerization/Multimerization of capsid protein p24 region. CCHC-type zinc fingers lie at residues 389-406 (IRCW…QCRA) and 410-427 (QGCW…NCPE). The segment at 433–509 (LDGPTGKAAP…DAPQRGDRGL (77 aa)) is disordered. Polar residues predominate over residues 448-465 (PSSSGADTNSTPNRSSSG). Composition is skewed to basic and acidic residues over residues 472-482 (AAREKAERAEG) and 497-507 (AGRDAPQRGDR). The interval 512-516 (PQFSL) is dimerization of protease. One can recognise a Peptidase A2 domain in the interval 532 to 601 (EVLLDTGADD…PINIFGRNIL (70 aa)). Catalysis depends on Asp536, which acts as the For protease activity; shared with dimeric partner. 2 dimerization of protease regions span residues 560-566 (GIGGFIN) and 599-611 (NILA…LNLP). Residues 655-845 (GQLEEAPPTN…PFQWMGYELW (191 aa)) enclose the Reverse transcriptase domain. Residues Asp720, Asp795, and Asp796 each contribute to the Mg(2+) site. Positions 837–845 (FQWMGYELW) are RT 'primer grip'. Positions 1007-1023 (WEQWWDNYWQVTWVPEW) match the Tryptophan repeat motif motif. The region spanning 1043-1166 (IPGTETFYTD…VDHLVSQGIR (124 aa)) is the RNase H type-1 domain. Mg(2+) is bound by residues Asp1052, Glu1087, Asp1107, and Asp1158. An Integrase-type zinc finger spans residues 1172–1213 (EKIEPAQEEHEKYHSNIKELTHKFGIPQLVARQIVNTCAQCQ). 4 residues coordinate Zn(2+): His1181, His1185, Cys1209, and Cys1212. The region spanning 1223 to 1374 (VNAEIGVWQM…PAERLINMIT (152 aa)) is the Integrase catalytic domain. Mg(2+) contacts are provided by Asp1233, Asp1285, and Glu1321. Positions 1392 to 1439 (FQVYYREGRDQLWKGPGELLWKGDGAVIVKVGADIKVVPRRKAKIIRD) form a DNA-binding region, integrase-type.

As to quaternary structure, homotrimer; further assembles as hexamers of trimers. Interacts with gp41 (via C-terminus). Interacts with host CALM1; this interaction induces a conformational change in the Matrix protein, triggering exposure of the myristate group. Interacts with host AP3D1; this interaction allows the polyprotein trafficking to multivesicular bodies during virus assembly. Part of the pre-integration complex (PIC) which is composed of viral genome, matrix protein, Vpr and integrase. Homodimer; the homodimer further multimerizes as homohexamers or homopentamers. Interacts with human PPIA/CYPA. Interacts with human NUP153. Interacts with host PDZD8; this interaction stabilizes the capsid. Interacts with monkey TRIM5; this interaction destabilizes the capsid. In terms of assembly, homodimer, whose active site consists of two apposed aspartic acid residues. As to quaternary structure, heterodimer of p66 RT and p51 RT (RT p66/p51). Heterodimerization of RT is essential for DNA polymerase activity. The overall folding of the subdomains is similar in p66 RT and p51 RT but the spatial arrangements of the subdomains are dramatically different. Homotetramer; may further associate as a homohexadecamer. Part of the pre-integration complex (PIC) which is composed of viral genome, matrix protein, Vpr and integrase. Interacts with human SMARCB1/INI1 and human PSIP1/LEDGF isoform 1. Interacts with human KPNA3; this interaction might play a role in nuclear import of the pre-integration complex. Interacts with human NUP153; this interaction might play a role in nuclear import of the pre-integration complex. It depends on Mg(2+) as a cofactor. Specific enzymatic cleavages by the viral protease yield mature proteins. The protease is released by autocatalytic cleavage. The polyprotein is cleaved during and after budding, this process is termed maturation. Proteolytic cleavage of p66 RT removes the RNase H domain to yield the p51 RT subunit. Nucleocapsid protein p7 might be further cleaved after virus entry.

The protein localises to the host cell membrane. It is found in the host endosome. Its subcellular location is the host multivesicular body. It localises to the virion membrane. The protein resides in the host nucleus. The protein localises to the host cytoplasm. It is found in the virion. The catalysed reaction is Endopeptidase for which the P1 residue is preferably hydrophobic.. It catalyses the reaction Endohydrolysis of RNA in RNA/DNA hybrids. Three different cleavage modes: 1. sequence-specific internal cleavage of RNA. Human immunodeficiency virus type 1 and Moloney murine leukemia virus enzymes prefer to cleave the RNA strand one nucleotide away from the RNA-DNA junction. 2. RNA 5'-end directed cleavage 13-19 nucleotides from the RNA end. 3. DNA 3'-end directed cleavage 15-20 nucleotides away from the primer terminus.. It carries out the reaction 3'-end directed exonucleolytic cleavage of viral RNA-DNA hybrid.. The enzyme catalyses DNA(n) + a 2'-deoxyribonucleoside 5'-triphosphate = DNA(n+1) + diphosphate. Protease: The viral protease is inhibited by many synthetic protease inhibitors (PIs), such as amprenavir, atazanavir, indinavir, loprinavir, nelfinavir, ritonavir and saquinavir. Use of protease inhibitors in tritherapy regimens permit more ambitious therapeutic strategies. Reverse transcriptase/ribonuclease H: RT can be inhibited either by nucleoside RT inhibitors (NRTIs) or by non nucleoside RT inhibitors (NNRTIs). NRTIs act as chain terminators, whereas NNRTIs inhibit DNA polymerization by binding a small hydrophobic pocket near the RT active site and inducing an allosteric change in this region. Classical NRTIs are abacavir, adefovir (PMEA), didanosine (ddI), lamivudine (3TC), stavudine (d4T), tenofovir (PMPA), zalcitabine (ddC), and zidovudine (AZT). Classical NNRTIs are atevirdine (BHAP U-87201E), delavirdine, efavirenz (DMP-266), emivirine (I-EBU), and nevirapine (BI-RG-587). The tritherapies used as a basic effective treatment of AIDS associate two NRTIs and one NNRTI. In terms of biological role, mediates, with Gag polyprotein, the essential events in virion assembly, including binding the plasma membrane, making the protein-protein interactions necessary to create spherical particles, recruiting the viral Env proteins, and packaging the genomic RNA via direct interactions with the RNA packaging sequence (Psi). Gag-Pol polyprotein may regulate its own translation, by the binding genomic RNA in the 5'-UTR. At low concentration, the polyprotein would promote translation, whereas at high concentration, the polyprotein would encapsidate genomic RNA and then shut off translation. Its function is as follows. Targets the polyprotein to the plasma membrane via a multipartite membrane-binding signal, that includes its myristoylated N-terminus. Matrix protein is part of the pre-integration complex. Implicated in the release from host cell mediated by Vpu. Binds to RNA. Forms the conical core that encapsulates the genomic RNA-nucleocapsid complex in the virion. Most core are conical, with only 7% tubular. The core is constituted by capsid protein hexamer subunits. The core is disassembled soon after virion entry. Host restriction factors such as TRIM5-alpha or TRIMCyp bind retroviral capsids and cause premature capsid disassembly, leading to blocks in reverse transcription. Capsid restriction by TRIM5 is one of the factors which restricts HIV-1 to the human species. Host PIN1 apparently facilitates the virion uncoating. On the other hand, interactions with PDZD8 or CYPA stabilize the capsid. Functionally, encapsulates and protects viral dimeric unspliced genomic RNA (gRNA). Binds these RNAs through its zinc fingers. Acts as a nucleic acid chaperone which is involved in rearangement of nucleic acid secondary structure during gRNA retrotranscription. Also facilitates template switch leading to recombination. As part of the polyprotein, participates in gRNA dimerization, packaging, tRNA incorporation and virion assembly. In terms of biological role, aspartyl protease that mediates proteolytic cleavages of Gag and Gag-Pol polyproteins during or shortly after the release of the virion from the plasma membrane. Cleavages take place as an ordered, step-wise cascade to yield mature proteins. This process is called maturation. Displays maximal activity during the budding process just prior to particle release from the cell. Also cleaves Nef and Vif, probably concomitantly with viral structural proteins on maturation of virus particles. Hydrolyzes host EIF4GI and PABP1 in order to shut off the capped cellular mRNA translation. The resulting inhibition of cellular protein synthesis serves to ensure maximal viral gene expression and to evade host immune response. Its function is as follows. Multifunctional enzyme that converts the viral RNA genome into dsDNA in the cytoplasm, shortly after virus entry into the cell. This enzyme displays a DNA polymerase activity that can copy either DNA or RNA templates, and a ribonuclease H (RNase H) activity that cleaves the RNA strand of RNA-DNA heteroduplexes in a partially processive 3' to 5' endonucleasic mode. Conversion of viral genomic RNA into dsDNA requires many steps. A tRNA(3)-Lys binds to the primer-binding site (PBS) situated at the 5'-end of the viral RNA. RT uses the 3' end of the tRNA primer to perform a short round of RNA-dependent minus-strand DNA synthesis. The reading proceeds through the U5 region and ends after the repeated (R) region which is present at both ends of viral RNA. The portion of the RNA-DNA heteroduplex is digested by the RNase H, resulting in a ssDNA product attached to the tRNA primer. This ssDNA/tRNA hybridizes with the identical R region situated at the 3' end of viral RNA. This template exchange, known as minus-strand DNA strong stop transfer, can be either intra- or intermolecular. RT uses the 3' end of this newly synthesized short ssDNA to perform the RNA-dependent minus-strand DNA synthesis of the whole template. RNase H digests the RNA template except for two polypurine tracts (PPTs) situated at the 5'-end and near the center of the genome. It is not clear if both polymerase and RNase H activities are simultaneous. RNase H probably can proceed both in a polymerase-dependent (RNA cut into small fragments by the same RT performing DNA synthesis) and a polymerase-independent mode (cleavage of remaining RNA fragments by free RTs). Secondly, RT performs DNA-directed plus-strand DNA synthesis using the PPTs that have not been removed by RNase H as primers. PPTs and tRNA primers are then removed by RNase H. The 3' and 5' ssDNA PBS regions hybridize to form a circular dsDNA intermediate. Strand displacement synthesis by RT to the PBS and PPT ends produces a blunt ended, linear dsDNA copy of the viral genome that includes long terminal repeats (LTRs) at both ends. Catalyzes viral DNA integration into the host chromosome, by performing a series of DNA cutting and joining reactions. This enzyme activity takes place after virion entry into a cell and reverse transcription of the RNA genome in dsDNA. The first step in the integration process is 3' processing. This step requires a complex comprising the viral genome, matrix protein, Vpr and integrase. This complex is called the pre-integration complex (PIC). The integrase protein removes 2 nucleotides from each 3' end of the viral DNA, leaving recessed CA OH's at the 3' ends. In the second step, the PIC enters cell nucleus. This process is mediated through integrase and Vpr proteins, and allows the virus to infect a non dividing cell. This ability to enter the nucleus is specific of lentiviruses, other retroviruses cannot and rely on cell division to access cell chromosomes. In the third step, termed strand transfer, the integrase protein joins the previously processed 3' ends to the 5' ends of strands of target cellular DNA at the site of integration. The 5'-ends are produced by integrase-catalyzed staggered cuts, 5 bp apart. A Y-shaped, gapped, recombination intermediate results, with the 5'-ends of the viral DNA strands and the 3' ends of target DNA strands remaining unjoined, flanking a gap of 5 bp. The last step is viral DNA integration into host chromosome. This involves host DNA repair synthesis in which the 5 bp gaps between the unjoined strands are filled in and then ligated. Since this process occurs at both cuts flanking the HIV genome, a 5 bp duplication of host DNA is produced at the ends of HIV-1 integration. Alternatively, Integrase may catalyze the excision of viral DNA just after strand transfer, this is termed disintegration. The sequence is that of Gag-Pol polyprotein (gag-pol) from Human immunodeficiency virus type 2 subtype A (isolate D194) (HIV-2).